We begin with the raw amino-acid sequence, 174 residues long: tRNA (cytidine(56)-2'-O)-methyltransferase (174 aa).

S-adenosyl-L-methionine is bound by residues Leu-83, 108-112 (GAEKV), and 126-133 (VGNQPHSE).

Belongs to the aTrm56 family. As to quaternary structure, homodimer.

Its subcellular location is the cytoplasm. It catalyses the reaction cytidine(56) in tRNA + S-adenosyl-L-methionine = 2'-O-methylcytidine(56) in tRNA + S-adenosyl-L-homocysteine + H(+). Functionally, specifically catalyzes the AdoMet-dependent 2'-O-ribose methylation of cytidine at position 56 in tRNAs. The polypeptide is tRNA (cytidine(56)-2'-O)-methyltransferase (Methanothrix thermoacetophila (strain DSM 6194 / JCM 14653 / NBRC 101360 / PT) (Methanosaeta thermophila)).